A 526-amino-acid polypeptide reads, in one-letter code: Thymocyte selection-associated high mobility group box protein TOX (526 aa).

2 disordered regions span residues 138-178 and 192-264; these read MPDI…PHGQ and GLNM…PQKP. The span at 192-203 shows a compositional bias: polar residues; sequence GLNMGGSNVPHN. Residues 209–220 show a composition bias toward low complexity; sequence GSKSATPSPSSS. Over residues 228–245 the composition is skewed to basic and acidic residues; that stretch reads DTSKINGGEKRPASDMGK. The Nuclear localization signal motif lies at 237–256; that stretch reads KRPASDMGKKPKTPKKKKKK. The segment covering 246–256 has biased composition (basic residues); sequence KPKTPKKKKKK. A DNA-binding region (HMG box) is located at residues 261-329; the sequence is PQKPVSAYAL…EYLKQLAAYR (69 aa).

It belongs to the high motility group (HMG) box superfamily. In terms of assembly, interacts with HBO1 complex composed at least of KAT7/HBO1, ING4, MEAF6, and JADE2; this complex is involved in histone acetylation. Interacts with DNMT1, LEO1, PAF1, SAP130 and SIN3A; these interactors regulate chromatin remodeling. Interacts with an array of proteins involved in RNA processing and translation and DNA replication. In terms of tissue distribution, expressed in NK cells. Highly expressed in tumor-infiltrating CD8-positive T cells (at protein level).

It is found in the nucleus. Functionally, transcriptional regulator with a major role in neural stem cell commitment and corticogenesis as well as in lymphoid cell development and lymphoid tissue organogenesis. Binds to GC-rich DNA sequences in the proximity of transcription start sites and may alter chromatin structure, modifying access of transcription factors to DNA. During cortical development, controls the neural stem cell pool by inhibiting the switch from proliferative to differentiating progenitors. Beyond progenitor cells, promotes neurite outgrowth in newborn neurons migrating to reach the cortical plate. May activate or repress critical genes for neural stem cell fate such as SOX2, EOMES and ROBO2. Plays an essential role in the development of lymphoid tissue-inducer (LTi) cells, a subset necessary for the formation of secondary lymphoid organs: peripheral lymph nodes and Peyer's patches. Acts as a developmental checkpoint and regulates thymocyte positive selection toward T cell lineage commitment. Required for the development of various T cell subsets, including CD4-positive helper T cells, CD8-positive cytotoxic T cells, regulatory T cells and CD1D-dependent natural killer T (NKT) cells. Required for the differentiation of common lymphoid progenitors (CMP) to innate lymphoid cells (ILC). May regulate the NOTCH-mediated gene program, promoting differentiation of the ILC lineage. Required at the progenitor phase of NK cell development in the bone marrow to specify NK cell lineage commitment. Upon chronic antigen stimulation, diverts T cell development by promoting the generation of exhaustive T cells, while suppressing effector and memory T cell programming. May regulate the expression of genes encoding inhibitory receptors such as PDCD1 and induce the exhaustion program, to prevent the overstimulation of T cells and activation-induced cell death. The protein is Thymocyte selection-associated high mobility group box protein TOX of Homo sapiens (Human).